A 429-amino-acid polypeptide reads, in one-letter code: Lysine-specific demethylase JMJ30 (429 aa).

A JmjC domain is found at serine 272 to serine 429. The Fe cation site is built by histidine 326, aspartate 328, and histidine 405.

Belongs to the JARID1 histone demethylase family. As to quaternary structure, interacts with EFM. Binds to ATXR2, ARF7 and ARF19. The cofactor is Fe(2+). Expressed ubiquitously in vasculatures, roots, rosette leaves, stems, inflorescences and siliques. Mainly present in the root meristem and root differentiation area. Observed at high level in callus.

The protein localises to the nucleus. The protein resides in the cytoplasm. Its subcellular location is the endoplasmic reticulum. It carries out the reaction N(6),N(6),N(6)-trimethyl-L-lysyl(36)-[histone H3] + 2 2-oxoglutarate + 2 O2 = N(6)-methyl-L-lysyl(36)-[histone H3] + 2 formaldehyde + 2 succinate + 2 CO2. It catalyses the reaction N(6),N(6),N(6)-trimethyl-L-lysyl(27)-[histone H3] + 2 2-oxoglutarate + 2 O2 = N(6)-methyl-L-lysyl(27)-[histone H3] + 2 formaldehyde + 2 succinate + 2 CO2. The catalysed reaction is N(6),N(6)-dimethyl-L-lysyl(36)-[histone H3] + 2 2-oxoglutarate + 2 O2 = L-lysyl(36)-[histone H3] + 2 formaldehyde + 2 succinate + 2 CO2. Its function is as follows. Histone demethylase that demethylates 'Lys-36' (H3K36me) of histone H3 with a specific activity for H3K36me3 and H3K36me2. Also active on 'Lys-27' (H3K27me) of histone H3 with a specific activity for H3K27me3 and H3K27me2. No activity on H3K36me1 and H3K27me1. Involved in the control of flowering time by demethylating H3K36me2 at the FT locus and repressing its expression. Acts within the central clock and contributes, in parallel with LUX, to temperature compensation, probably as a component of the evening complex, to maintain circadian period at increasing temperatures; this mechanism involves binding to and regulation of CCA1 and PRR7 promoters. Works in concert with TOC1 to promote the morning-phased clock genes CCA1 and LHY which function as components of the central oscillator. Together with JMJ32, regulates the flowering-repressor FLOWERING LOCUS C (FLC) locus by removing the repressive histone modification H3 lysine 27 trimethylation (H3K27me3), especially at elevated temperatures (e.g. 29 degrees Celsius), thus preventing extreme precocious flowering. JMJ30 and JMJ32 are regulators involved in the integration of abscisic acid (ABA) and brassinosteroids (BR) signaling pathways. Together with JMJ32, controls ABA-mediated growth arrest during the post-germination stage in unfavorable conditions, and responses to ABA during root development, via the removal of repressive histone mark (H3K27me3) from the SnRK2.8 promoter, thus promoting SnRK2.8 expression and subsequent kinase-dependent ABI3 activation. In addition, removes the repressive histone marks (H3K27me3) from the BZR1 locus in response to stress and ABA, thus activating the BR signaling pathway which, in turn, inhibits the ABA signaling pathway. Able to drive tissue identity changes to promote callus formation form somatic cells via a massive genome-wide chromatin remodeling (e.g. H3K9me3 demethylation) leading to the induction of Lateral organ Boundaries-Domain (LBD) genes (e.g. LBD16 and LBD29) that establish root primordia; when in complex with ARF proteins (e.g. ARF7 and ARF19), recruits ATXR2 which promotes the deposition of H3K36me3 at LBD genes promoters, thus ensuring their stable activation during callus formation. The sequence is that of Lysine-specific demethylase JMJ30 from Arabidopsis thaliana (Mouse-ear cress).